We begin with the raw amino-acid sequence, 168 residues long: Gamma-glutamylaminecyclotransferase (168 aa).

A disordered region spans residues 1–20; it reads MPGPECKWSTTETGAPCGTD. 32–35 is a binding site for substrate; the sequence is YGTL. Glu107 functions as the Proton acceptor in the catalytic mechanism.

This sequence belongs to the gamma-glutamylcyclotransferase family. As to quaternary structure, monomer.

The enzyme catalyses epsilon-(gamma-L-glutamyl)-L-lysine = 5-oxo-L-proline + L-lysine. Its function is as follows. Contributes to degradation of proteins cross-linked by transglutaminases by degrading the cross-link between a lysine and a glutamic acid residue. Catalyzes the formation of 5-oxo-L-proline from L-gamma-glutamyl-L-epsilon-lysine. Inactive with L-gamma-glutamyl-alpha-amino acid substrates such as L-gamma-glutamyl-L-alpha-cysteine and L-gamma-glutamyl-L-alpha-alanine. This Bos taurus (Bovine) protein is Gamma-glutamylaminecyclotransferase (GGACT).